Reading from the N-terminus, the 141-residue chain is Alpha-lactalbumin (141 aa).

Residues 1–19 form the signal peptide; it reads MMPLVPLLLVSIVFPGIQA. Residues 20 to 141 enclose the C-type lysozyme domain; the sequence is TQLTRCELTE…ENLEQWVCKK (122 aa). Cystine bridges form between Cys25–Cys139, Cys47–Cys130, Cys80–Cys96, and Cys92–Cys110. A glycan (N-linked (GlcNAc...) asparagine) is linked at Asn64. Ca(2+)-binding residues include Asp101, Asp106, and Asp107.

It belongs to the glycosyl hydrolase 22 family. In terms of assembly, lactose synthase (LS) is a heterodimer of a catalytic component, beta1,4-galactosyltransferase (beta4Gal-T1) and a regulatory component, alpha-lactalbumin (LA). Mammary gland specific. Secreted in milk.

The protein localises to the secreted. In terms of biological role, regulatory subunit of lactose synthase, changes the substrate specificity of galactosyltransferase in the mammary gland making glucose a good acceptor substrate for this enzyme. This enables LS to synthesize lactose, the major carbohydrate component of milk. In other tissues, galactosyltransferase transfers galactose onto the N-acetylglucosamine of the oligosaccharide chains in glycoproteins. The polypeptide is Alpha-lactalbumin (LALBA) (Oryctolagus cuniculus (Rabbit)).